Here is a 145-residue protein sequence, read N- to C-terminus: Large ribosomal subunit protein uL16 (145 aa).

Basic residues predominate over residues 1–17 (MLMPKRVKHRKVQRGRM). A disordered region spans residues 1–20 (MLMPKRVKHRKVQRGRMKGV).

The protein belongs to the universal ribosomal protein uL16 family. As to quaternary structure, part of the 50S ribosomal subunit.

In terms of biological role, binds 23S rRNA and is also seen to make contacts with the A and possibly P site tRNAs. The polypeptide is Large ribosomal subunit protein uL16 (Acetivibrio thermocellus (strain ATCC 27405 / DSM 1237 / JCM 9322 / NBRC 103400 / NCIMB 10682 / NRRL B-4536 / VPI 7372) (Clostridium thermocellum)).